A 297-amino-acid chain; its full sequence is NADPH-dependent 1-acyldihydroxyacetone phosphate reductase (297 aa).

The short motif at 16–20 (GASGG) is the GXSXG element. Serine 18 functions as the Nucleophile; for lipase activity in the catalytic mechanism. NADP(+)-binding residues include isoleucine 21, aspartate 64, asparagine 93, arginine 126, tyrosine 157, lysine 161, valine 190, and threonine 192. The active-site Proton acceptor is the tyrosine 157. The Lowers pKa of active site Tyr role is filled by lysine 161.

This sequence belongs to the short-chain dehydrogenases/reductases (SDR) family.

It localises to the lipid droplet. The protein localises to the mitochondrion outer membrane. The protein resides in the endoplasmic reticulum. The catalysed reaction is a 1-acylglycerone 3-phosphate + NADPH + H(+) = a 1-acyl-sn-glycero-3-phosphate + NADP(+). It carries out the reaction 1-hexadecanoyl-sn-glycero-3-phosphate + NADP(+) = 1-hexadecanoylglycerone 3-phosphate + NADPH + H(+). The enzyme catalyses a triacylglycerol + H2O = a diacylglycerol + a fatty acid + H(+). It catalyses the reaction 1,2,3-tri-(9Z-octadecenoyl)-glycerol + H2O = di-(9Z)-octadecenoylglycerol + (9Z)-octadecenoate + H(+). Inhibited by divalent cations and N-ethylmaleimide. Activity is reduced under anaerobic growth conditions. In terms of biological role, can convert acyl and alkyl dihydroxyacetone-phosphate (DHAP) into glycerolipids and ether lipids, respectively. Required for the biosynthesis of phosphatidic acid via the DHAP pathway, where it reduces 1-acyl DHAP to lysophosphatidic acid (LPA). Also has triacylglycerol (TAG) lipase activity. Involved in the mobilization of the non-polar storage lipids triacylglycerols (TAGs) from lipid particles by hydrolysis of TAGs. Required for spore germination. Plays a role in cell wall biogenesis, but this effect may be indirect by affecting the activities of cell wall synthesis enzymes. Lipolysis of TAG by AYR1 is essential for starvation-induced autophagy. Forms an NADPH-regulated cation-selective channel in the mitochondrial outer membrane. This is NADPH-dependent 1-acyldihydroxyacetone phosphate reductase from Saccharomyces cerevisiae (strain ATCC 204508 / S288c) (Baker's yeast).